A 1114-amino-acid chain; its full sequence is Isoleucine--tRNA ligase (1114 aa).

The 'HIGH' region motif lies at Pro61–His71. Positions Lys640–His644 match the 'KMSKS' region motif. ATP is bound at residue Lys643.

Belongs to the class-I aminoacyl-tRNA synthetase family. IleS type 2 subfamily. In terms of assembly, monomer. Requires Zn(2+) as cofactor.

The protein resides in the cytoplasm. It catalyses the reaction tRNA(Ile) + L-isoleucine + ATP = L-isoleucyl-tRNA(Ile) + AMP + diphosphate. Functionally, catalyzes the attachment of isoleucine to tRNA(Ile). As IleRS can inadvertently accommodate and process structurally similar amino acids such as valine, to avoid such errors it has two additional distinct tRNA(Ile)-dependent editing activities. One activity is designated as 'pretransfer' editing and involves the hydrolysis of activated Val-AMP. The other activity is designated 'posttransfer' editing and involves deacylation of mischarged Val-tRNA(Ile). The sequence is that of Isoleucine--tRNA ligase from Cutibacterium acnes (strain DSM 16379 / KPA171202) (Propionibacterium acnes).